The following is a 352-amino-acid chain: Ion-translocating oxidoreductase complex subunit D (352 aa).

The next 4 helical transmembrane spans lie at 20-40, 42-62, 69-91, and 123-143; these read IMLL…WFFG, GTLF…AIVL, VASH…SIPP, and PAMI…TSWL. At threonine 187 the chain carries FMN phosphoryl threonine. 5 helical membrane passes run 215–235, 242–262, 267–287, 301–321, and 322–342; these read LAGV…VFLL, WHIP…GWLF, LASP…FFIL, LIFG…GGYP, and DGVA…DYYT.

It belongs to the NqrB/RnfD family. As to quaternary structure, the complex is composed of six subunits: RsxA, RsxB, RsxC, RsxD, RsxE and RsxG. It depends on FMN as a cofactor.

It is found in the cell inner membrane. In terms of biological role, part of a membrane-bound complex that couples electron transfer with translocation of ions across the membrane. Required to maintain the reduced state of SoxR. The sequence is that of Ion-translocating oxidoreductase complex subunit D from Salmonella agona (strain SL483).